Consider the following 688-residue polypeptide: MTTQNFLVEIGTEELPPKALKTLATSFADNVEAELNQAGLSFDKIEWFAAPRRLAVKVLNLATQQPSKEIEKRGPAVSAAFDAEGKPTKAAEGWARGCGITVEQAERIATDKGEWLIHRAKIEGQPTKNLLNDIVANALAKLPIPKPMRWADKTVQFIRPVHTVTMLLGDELIEGEILGVASARTIRGHRFLGEKEFYIQHADQYPQLLREKGSVVADFNERKAEILAKSQAKATALGGVADIEESLLEEVTSLVEYPNVLAAKFEEHFLAVPAEALVYTMKGDQKYFPIYDKDGKLLPHFIFVSNINPEDPTAIIEGNEKVVRPRLTDAEFFFKTDLKQKLVDRLPRLETVLFQQQLGTLKDKTDRIEQLAGEIAKQIGADEAKAKRAGLLSKCDLMTNMVFEFTDTQGVMGMHYARHDGEDEEVAVALNEQYMPRFAGDELPKSLVASAVALADKFDTLTGIFGIGQAPKGSADPFALRRAALGALRIIVEKNLPLDLEDLVKKSAALFGDKLTNQNVVADVVDFMLGRFRAWYQDEGIAVDVIQAVLARRPTRPADFDARVRAVSHFRTLDSAEALAAANKRVSNILAKAGAAIGEINLTACVEPAEKALAEAVLALRTEVQPLIAQGDYTTVLDKLANLRAPVDSFFDNVMVNAEDPALRQNRLAILNTLQGLFLQVADISVLQ.

This sequence belongs to the class-II aminoacyl-tRNA synthetase family. In terms of assembly, tetramer of two alpha and two beta subunits.

The protein localises to the cytoplasm. It catalyses the reaction tRNA(Gly) + glycine + ATP = glycyl-tRNA(Gly) + AMP + diphosphate. In Haemophilus influenzae (strain ATCC 51907 / DSM 11121 / KW20 / Rd), this protein is Glycine--tRNA ligase beta subunit (glyS).